Consider the following 90-residue polypeptide: Small ribosomal subunit protein uS19 (90 aa).

It belongs to the universal ribosomal protein uS19 family.

Functionally, protein S19 forms a complex with S13 that binds strongly to the 16S ribosomal RNA. This chain is Small ribosomal subunit protein uS19, found in Rhizorhabdus wittichii (strain DSM 6014 / CCUG 31198 / JCM 15750 / NBRC 105917 / EY 4224 / RW1) (Sphingomonas wittichii).